The following is a 283-amino-acid chain: Bifunctional protein FolD (283 aa).

Residues 166-168, serine 191, and threonine 232 each bind NADP(+); that span reads GRS.

The protein belongs to the tetrahydrofolate dehydrogenase/cyclohydrolase family. As to quaternary structure, homodimer.

It catalyses the reaction (6R)-5,10-methylene-5,6,7,8-tetrahydrofolate + NADP(+) = (6R)-5,10-methenyltetrahydrofolate + NADPH. It carries out the reaction (6R)-5,10-methenyltetrahydrofolate + H2O = (6R)-10-formyltetrahydrofolate + H(+). The protein operates within one-carbon metabolism; tetrahydrofolate interconversion. In terms of biological role, catalyzes the oxidation of 5,10-methylenetetrahydrofolate to 5,10-methenyltetrahydrofolate and then the hydrolysis of 5,10-methenyltetrahydrofolate to 10-formyltetrahydrofolate. This is Bifunctional protein FolD from Halothermothrix orenii (strain H 168 / OCM 544 / DSM 9562).